Here is a 314-residue protein sequence, read N- to C-terminus: Methionyl-tRNA formyltransferase (314 aa).

111-114 (SLLP) contacts (6S)-5,6,7,8-tetrahydrofolate.

Belongs to the Fmt family.

It catalyses the reaction L-methionyl-tRNA(fMet) + (6R)-10-formyltetrahydrofolate = N-formyl-L-methionyl-tRNA(fMet) + (6S)-5,6,7,8-tetrahydrofolate + H(+). Functionally, attaches a formyl group to the free amino group of methionyl-tRNA(fMet). The formyl group appears to play a dual role in the initiator identity of N-formylmethionyl-tRNA by promoting its recognition by IF2 and preventing the misappropriation of this tRNA by the elongation apparatus. This Chlorobium chlorochromatii (strain CaD3) protein is Methionyl-tRNA formyltransferase.